The primary structure comprises 373 residues: MHVTHLSLADFRSYARVEVPLDPGVTAFVGPNGQGKTNLVEAVGYLATLGSHRVSSDAPLVRMGAERAIIRAQVRQDERRQLVELELNPGKANRARINRSSQVRPRDVLGIVRTVLFAPEDLALIKGDPGERRRFLDELITARSPRMAGVRSDYERVLKQRNTLLKTAALARRHGGRSMDLSTLDVWDQHLARAGAELLAQRLDLIAALQPLADKAYEQLAPGGGPIALEYKPSAPGEAHTRDALYEQLMAALAEARKQEIERGVTLVGPQRDELLLKLGQLPAKGYASHGESWSYALALRLASYDLLRAEGNEPVLVLDDVFAELDTRRRERLAELVAPGEQVLVTAAVDDDVPGVLAGTRYTVSEGTVERV.

An ATP-binding site is contributed by 30 to 37 (GPNGQGKT).

Belongs to the RecF family.

Its subcellular location is the cytoplasm. Functionally, the RecF protein is involved in DNA metabolism; it is required for DNA replication and normal SOS inducibility. RecF binds preferentially to single-stranded, linear DNA. It also seems to bind ATP. The sequence is that of DNA replication and repair protein RecF from Streptomyces avermitilis (strain ATCC 31267 / DSM 46492 / JCM 5070 / NBRC 14893 / NCIMB 12804 / NRRL 8165 / MA-4680).